Reading from the N-terminus, the 329-residue chain is Ketol-acid reductoisomerase (NADP(+)) (329 aa).

The region spanning 2 to 181 is the KARI N-terminal Rossmann domain; that stretch reads MKKYYESDAD…GATRAVVLET (180 aa). Residues 25 to 28, Arg-48, Ser-52, and 82 to 85 each bind NADP(+); these read YGSQ and DELQ. The active site involves His-107. Residue Gly-133 coordinates NADP(+). The KARI C-terminal knotted domain maps to 182–327; the sequence is TFREETETDL…KEVRAMMPQF (146 aa). Mg(2+) is bound by residues Asp-190, Glu-194, Glu-226, and Glu-230. Substrate is bound at residue Ser-251.

This sequence belongs to the ketol-acid reductoisomerase family. Mg(2+) is required as a cofactor.

The enzyme catalyses (2R)-2,3-dihydroxy-3-methylbutanoate + NADP(+) = (2S)-2-acetolactate + NADPH + H(+). It catalyses the reaction (2R,3R)-2,3-dihydroxy-3-methylpentanoate + NADP(+) = (S)-2-ethyl-2-hydroxy-3-oxobutanoate + NADPH + H(+). It functions in the pathway amino-acid biosynthesis; L-isoleucine biosynthesis; L-isoleucine from 2-oxobutanoate: step 2/4. The protein operates within amino-acid biosynthesis; L-valine biosynthesis; L-valine from pyruvate: step 2/4. Involved in the biosynthesis of branched-chain amino acids (BCAA). Catalyzes an alkyl-migration followed by a ketol-acid reduction of (S)-2-acetolactate (S2AL) to yield (R)-2,3-dihydroxy-isovalerate. In the isomerase reaction, S2AL is rearranged via a Mg-dependent methyl migration to produce 3-hydroxy-3-methyl-2-ketobutyrate (HMKB). In the reductase reaction, this 2-ketoacid undergoes a metal-dependent reduction by NADPH to yield (R)-2,3-dihydroxy-isovalerate. The sequence is that of Ketol-acid reductoisomerase (NADP(+)) from Methanoregula boonei (strain DSM 21154 / JCM 14090 / 6A8).